Consider the following 312-residue polypeptide: R2-like ligand binding oxidase (312 aa).

Positions 68, 101, and 104 each coordinate Mn(2+). A cross-link (3-(O4'-tyrosyl)-valine (Val-Tyr)) is located at residues 71–162 (VTQDIQPFMA…AAQVRASATY (92 aa)). Glutamate 101 is a Fe cation binding site. Positions 167, 202, and 205 each coordinate Fe cation.

Belongs to the ribonucleoside diphosphate reductase small chain family. R2-like ligand binding oxidase subfamily. In terms of assembly, homodimer. Requires Fe cation as cofactor. It depends on Mn(2+) as a cofactor.

Its function is as follows. Probable oxidase that might be involved in lipid metabolism. The sequence is that of R2-like ligand binding oxidase from Mycobacterium sp. (strain KMS).